A 395-amino-acid polypeptide reads, in one-letter code: S-adenosylmethionine synthase (395 aa).

Position 16 (H16) interacts with ATP. Residue D18 coordinates Mg(2+). A K(+)-binding site is contributed by E44. L-methionine-binding residues include E57 and Q100. Residues Q100–R110 form a flexible loop region. ATP contacts are provided by residues D167–K169, R233–F234, D242, R248–K249, A265, and K269. Residue D242 participates in L-methionine binding. K273 is a binding site for L-methionine.

It belongs to the AdoMet synthase family. In terms of assembly, homotetramer; dimer of dimers. The cofactor is Mg(2+). K(+) serves as cofactor.

The protein localises to the cytoplasm. It catalyses the reaction L-methionine + ATP + H2O = S-adenosyl-L-methionine + phosphate + diphosphate. It participates in amino-acid biosynthesis; S-adenosyl-L-methionine biosynthesis; S-adenosyl-L-methionine from L-methionine: step 1/1. Its function is as follows. Catalyzes the formation of S-adenosylmethionine (AdoMet) from methionine and ATP. The overall synthetic reaction is composed of two sequential steps, AdoMet formation and the subsequent tripolyphosphate hydrolysis which occurs prior to release of AdoMet from the enzyme. This chain is S-adenosylmethionine synthase, found in Burkholderia thailandensis (strain ATCC 700388 / DSM 13276 / CCUG 48851 / CIP 106301 / E264).